A 150-amino-acid chain; its full sequence is UPF0735 ACT domain-containing protein DSY2247 (150 aa).

An ACT domain is found at 74 to 149 (TFSLTLENTA…GVRKIEVIGQ (76 aa)).

The protein belongs to the UPF0735 family.

The polypeptide is UPF0735 ACT domain-containing protein DSY2247 (Desulfitobacterium hafniense (strain Y51)).